Consider the following 320-residue polypeptide: Glutaconate CoA-transferase subunit A (320 aa).

The protein belongs to the 3-oxoacid CoA-transferase subunit A family. Heterooctamer of four A and four B subunits.

The protein resides in the cytoplasm. It carries out the reaction trans-glutaconate + acetyl-CoA = (2E)-glutaconyl-CoA + acetate. Its pathway is amino-acid degradation; L-glutamate degradation via hydroxyglutarate pathway; crotonoyl-CoA from L-glutamate: step 3/5. Catalyzes the transfer of the CoA moiety from acetyl-CoA to (R)-2-hydroxyglutarate and related compounds like glutaconate. The chain is Glutaconate CoA-transferase subunit A (gctA) from Acidaminococcus fermentans (strain ATCC 25085 / DSM 20731 / CCUG 9996 / CIP 106432 / VR4).